A 353-amino-acid chain; its full sequence is Phospho-furanose lactonase (353 aa).

His24, His26, Lys153, His186, and His214 together coordinate Zn(2+). Residue Lys153 is modified to N6-carboxylysine. 244-245 lines the substrate pocket; sequence KY. Asp272 is a Zn(2+) binding site. 275–278 serves as a coordination point for substrate; it reads RILY.

The protein belongs to the metallo-dependent hydrolases superfamily. Phosphotriesterase family. Zn(2+) serves as cofactor.

The catalysed reaction is a 1,4-lactone + H2O = a 4-hydroxyacid + H(+). The enzyme catalyses D-xylono-1,4-lactone 5-phosphate + H2O = 5-phospho-D-xylonate + H(+). It catalyses the reaction L-arabino-1,4-lactone 5-phosphate + H2O = 5-phospho-L-arabinonate + H(+). Its function is as follows. Catalyzes the hydrolysis of D-xylono-1,4-lactone-5-phosphate and L-arabino-1,4-lactone-5-phosphate. Also able to hydrolyze carboxy 1,4-lactones. This chain is Phospho-furanose lactonase, found in Mycoplasmopsis synoviae (strain 53) (Mycoplasma synoviae).